The primary structure comprises 101 residues: MKIIRKNKKDKERREIYKQAEKMKNMYKMLRRNELLDQETRNYFNMKVTSSEKNSSISRIKNRCVETGRSRGIISAYRISRLRFREYMKMGLISGVKKISY.

Belongs to the universal ribosomal protein uS14 family. As to quaternary structure, component of the mitochondrial ribosome small subunit (28S) which comprises a 12S rRNA and about 30 distinct proteins. Interacts with LIAT1.

It is found in the mitochondrion. In Dictyostelium discoideum (Social amoeba), this protein is Small ribosomal subunit protein uS14m (mrps14).